The sequence spans 512 residues: Glutathione-binding protein GsiB (512 aa).

Positions 1 to 26 (MTQFITHKWLAALGLASSIAAFPALA) are cleaved as a signal peptide.

The protein belongs to the bacterial solute-binding protein 5 family. The complex is composed of two ATP-binding proteins (GsiA), two transmembrane proteins (GsiC and GsiD) and a solute-binding protein (GsiB).

It localises to the periplasm. Part of the ABC transporter complex GsiABCD involved in glutathione import. Binds glutathione. This is Glutathione-binding protein GsiB from Salmonella paratyphi A (strain ATCC 9150 / SARB42).